The sequence spans 419 residues: MLGIITFIIIFGILVIVHEFGHFYFAKKSGILVREFAIGMGPKIFSHVDQGGTLYTLRMLPLGGYVRMAGWGDDKTEIKTGTPASLTLNEQGFVKRINLSQSKLDPTSLPMHVTGYDLEDQLSITGLVLEETKTYKVAHDATIVEEDGTEIRIAPLDVQYQNASIGGRLITNFAGPMNNFILGIVVFILLVFLQGGMPDFSSNHVGVQENGAAAKAGLRDNDQIVAINGYKVTSWNDLTEAVDLATRDLGPSQTIKVTYKSHQRLKTVAVKPQKHAKTYTIGVKASLKTGFKDKLLGGLELAWSGAFTILNALKGLITGFSLNKLGGPVAMYDMSNQAAQNGLESVLSLMAMLSINLGIFNLIPIPALDGGKILMNIIEAIRRKPIKQETEAYITLAGVAIMVVLMIAVTWNDIMRVFF.

His-18 is a Zn(2+) binding site. Glu-19 is an active-site residue. His-22 lines the Zn(2+) pocket. Helical transmembrane passes span 169 to 191 (LITN…ILLV), 301 to 323 (LAWS…FSLN), 343 to 365 (LESV…LIPI), and 392 to 411 (AYIT…AVTW). Residues 175–274 (GPMNNFILGI…LKTVAVKPQK (100 aa)) form the PDZ domain.

This sequence belongs to the peptidase M50B family. Zn(2+) is required as a cofactor.

The protein localises to the cell membrane. The sequence is that of Putative zinc metalloprotease M6_Spy1682 from Streptococcus pyogenes serotype M6 (strain ATCC BAA-946 / MGAS10394).